A 451-amino-acid polypeptide reads, in one-letter code: Chromosomal replication initiator protein DnaA (451 aa).

The interval 1–72 (MSLPTSLWDK…TELLDELSDT (72 aa)) is domain I, interacts with DnaA modulators. The tract at residues 72-114 (TPPQIRLQIGSRSTEMPTKNSHEPSHRKAAAPPAGTTISHTQA) is domain II. A compositionally biased stretch (polar residues) spans 81 to 90 (GSRSTEMPTK). The segment at 81–106 (GSRSTEMPTKNSHEPSHRKAAAPPAG) is disordered. Residues 115–331 (NINSNFTFDS…GALKRVIANA (217 aa)) are domain III, AAA+ region. Residues glycine 159, glycine 161, lysine 162, and threonine 163 each contribute to the ATP site. The interval 332-451 (HFTGQSITVD…YKNLMRILSG (120 aa)) is domain IV, binds dsDNA.

It belongs to the DnaA family. As to quaternary structure, oligomerizes as a right-handed, spiral filament on DNA at oriC.

It localises to the cytoplasm. Functionally, plays an essential role in the initiation and regulation of chromosomal replication. ATP-DnaA binds to the origin of replication (oriC) to initiate formation of the DNA replication initiation complex once per cell cycle. Binds the DnaA box (a 9 base pair repeat at the origin) and separates the double-stranded (ds)DNA. Forms a right-handed helical filament on oriC DNA; dsDNA binds to the exterior of the filament while single-stranded (ss)DNA is stabiized in the filament's interior. The ATP-DnaA-oriC complex binds and stabilizes one strand of the AT-rich DNA unwinding element (DUE), permitting loading of DNA polymerase. After initiation quickly degrades to an ADP-DnaA complex that is not apt for DNA replication. Binds acidic phospholipids. The chain is Chromosomal replication initiator protein DnaA from Coxiella burnetii (strain CbuK_Q154) (Coxiella burnetii (strain Q154)).